A 251-amino-acid polypeptide reads, in one-letter code: MKPVLSLLFKLGKKKQTLEKAVESIQKGNKDLQNELIQQYKPFIAKTVSSVCKRYIDEKDDEFSIGLIAFNEAIEKYSPEKGNSLLAFAELIIKRKVIDYIRKEARSAQNINIDLQEGDDQESSQSLIEAELSIDEYRRQIEQEQRREEILYFQKQLKDYGLSFKELLENSPKHTDARQNAIKVAMTLVEHEELAAILYTKKQLPVKQLEQLVSVSRKTIERNRKYIIAMCIIITGDYIYLKDYLKGVLHS.

A Polymerase core binding motif is present at residues 61-74 (DEFSIGLIAFNEAI). The H-T-H motif DNA-binding region spans 206-225 (VKQLEQLVSVSRKTIERNRK).

It belongs to the sigma-70 factor family. SigI subfamily. As to quaternary structure, interacts with RsgI.

The protein localises to the cytoplasm. Negatively regulated by the anti-sigma-I factor RsgI. Upon exposure to heat, SigI is released from RsgI and activated. Transient heat activation of SigI may depend upon DnaK chaperone. Sigma factors are initiation factors that promote the attachment of RNA polymerase to specific initiation sites and are then released. This sigma factor is involved in regulation of cell wall metabolism in response to heat stress. Acts by regulating the expression of genes such as bcrC, mreBH and lytE. Also plays a role in survival at low temperatures. The sequence is that of RNA polymerase sigma factor SigI from Bacillus subtilis (strain 168).